The chain runs to 371 residues: MAKIMIAMSGGVDSSLAAALLHEAGHDVTGVTLHLWEGDDDRLAESLCCSQEMTESARRVCAQLGIPYYVFNYQREFRRSVIEYFLREYASGFTPNPCLECNREIKFRALLARARALGFDYVATGHYARIRVDKTPADHSASPSPNGAQRAVYRLLRAVDEEKDQSYMLYMLGQDDLARLMFPIGEYTKAEVRALAAARGLASANRPESQDICFVPGGDYRNLLREERPDALRPGPILDLEGREVGRHQGLPLYTIGQRRGLGIATGQPMYVMALDVARNAVIVGPESALRRTTLRAERVTFVSGSWPEAPFDCLAQIRAHADAVPARVTPVEPERVEVRFEHPQRAITPGQAIVFYDGAVVLGGGRIARD.

ATP is bound by residues 7–14 (AMSGGVDS) and Leu-33. Residue Cys-101 is the Nucleophile of the active site. A disulfide bridge connects residues Cys-101 and Cys-213. An ATP-binding site is contributed by Gly-125. An interaction with tRNA region spans residues 163 to 165 (KDQ). The Cysteine persulfide intermediate role is filled by Cys-213.

Belongs to the MnmA/TRMU family.

Its subcellular location is the cytoplasm. It carries out the reaction S-sulfanyl-L-cysteinyl-[protein] + uridine(34) in tRNA + AH2 + ATP = 2-thiouridine(34) in tRNA + L-cysteinyl-[protein] + A + AMP + diphosphate + H(+). Its function is as follows. Catalyzes the 2-thiolation of uridine at the wobble position (U34) of tRNA, leading to the formation of s(2)U34. The polypeptide is tRNA-specific 2-thiouridylase MnmA (Roseiflexus castenholzii (strain DSM 13941 / HLO8)).